A 337-amino-acid polypeptide reads, in one-letter code: MADAAPQLGKRKRELDVEEAHAASTEEKEAGVGNGTCAPVRLPFSGFRLQKVLRESARDKIIFLHGKVNEASGDGDGEDAVVILEKTPFQVEQVAQLLTGSPELQLQFSNDIYSTYHLFPPRQLNDVKTTVVYPATEKHLQKYLRQDLRLIRETGDDYRNITLPHLESQSLSIQWVYNILDKKAEADRIVFENPDPSDGFVLIPDLKWNQQQLDDLYLIAICHRRGIRSLRDLTPEHLPLLRNILHQGQEAILQRYRMKGDHLRVYLHYLPSYYHLHVHFTALGFEAPGSGVERAHLLAEVIENLECDPRHYQQRTLTFALRADDPLLKLLQEAQQS.

A disordered region spans residues M1–G35. The residue at position 2 (A2) is an N-acetylalanine. A nuclear localization signal (NLS) motif is present at residues K10–R13. A compositionally biased stretch (basic and acidic residues) spans R13–A30. Residues S24 and S101 each carry the phosphoserine modification. N6-acetyllysine is present on residues K138 and K142. The nuclear export sequence (NES) signature appears at K142–T154. Residues W175, E185, D205, K207, and H268–H279 contribute to the substrate site. A Histidine triad motif motif is present at residues H275 to H279. Residue H277 is the Nucleophile of the active site.

It belongs to the HIT family. As to quaternary structure, homodimer. Associates with components of the exosome multienzyme ribonuclease complex, such as EXOSC3 and EXOSC4. Interacts with NDOR1. In terms of tissue distribution, detected in liver, brain, kidney, testis and prostate.

The protein resides in the cytoplasm. Its subcellular location is the nucleus. It catalyses the reaction a 5'-end (N(7)-methyl 5'-triphosphoguanosine)-ribonucleoside in mRNA + H2O = N(7)-methyl-GMP + a 5'-end diphospho-ribonucleoside in mRNA + 2 H(+). With respect to regulation, the hydrolytic product 7-methylguanosine diphosphate (m7GDP) efficiently inhibits the decapping scavenger activity and acts as a competitive inhibitor in vitro. Inhibited by 2,4-diaminoquinazoline. Decapping scavenger enzyme that catalyzes the cleavage of a residual cap structure following the degradation of mRNAs by the 3'-&gt;5' exosome-mediated mRNA decay pathway. Hydrolyzes cap analog structures like 7-methylguanosine nucleoside triphosphate (m7GpppG) with up to 10 nucleotide substrates (small capped oligoribonucleotides) and specifically releases 5'-phosphorylated RNA fragments and 7-methylguanosine monophosphate (m7GMP). Cleaves cap analog structures like tri-methyl guanosine nucleoside triphosphate (m3(2,2,7)GpppG) with very poor efficiency. Does not hydrolyze unmethylated cap analog (GpppG) and shows no decapping activity on intact m7GpppG-capped mRNA molecules longer than 25 nucleotides. Does not hydrolyze 7-methylguanosine diphosphate (m7GDP) to m7GMP. May also play a role in the 5'-&gt;3 mRNA decay pathway; m7GDP, the downstream product released by the 5'-&gt;3' mRNA mediated decapping activity, may be also converted by DCPS to m7GMP. Binds to m7GpppG and strongly to m7GDP. Plays a role in first intron splicing of pre-mRNAs. Inhibits activation-induced cell death. This Homo sapiens (Human) protein is m7GpppX diphosphatase (DCPS).